Reading from the N-terminus, the 648-residue chain is Protein kinase YegI (648 aa).

The Protein kinase domain maps to 15–302 (TTLGRELGKG…KAWVAALDSL (288 aa)). Residues 21–29 (LGKGGEGAV) and Lys41 each bind ATP. The Proton acceptor role is filled by Asp143.

Autophosphorylated. Dephosphorylated by PphC.

Functionally, probable serine/threonine kinase. This chain is Protein kinase YegI (yegI), found in Escherichia coli (strain K12).